The primary structure comprises 211 residues: Small ribosomal subunit protein eS8 (211 aa).

It belongs to the eukaryotic ribosomal protein eS8 family.

The polypeptide is Small ribosomal subunit protein eS8 (rps8) (Dictyostelium discoideum (Social amoeba)).